Reading from the N-terminus, the 301-residue chain is UDP-N-acetylenolpyruvoylglucosamine reductase (301 aa).

In terms of domain architecture, FAD-binding PCMH-type spans 30 to 194; sequence VGGEADYLVF…LSVKFALAPG (165 aa). The active site involves arginine 173. Catalysis depends on serine 223, which acts as the Proton donor. The active site involves glutamate 293.

It belongs to the MurB family. It depends on FAD as a cofactor.

It is found in the cytoplasm. The enzyme catalyses UDP-N-acetyl-alpha-D-muramate + NADP(+) = UDP-N-acetyl-3-O-(1-carboxyvinyl)-alpha-D-glucosamine + NADPH + H(+). It participates in cell wall biogenesis; peptidoglycan biosynthesis. In terms of biological role, cell wall formation. The chain is UDP-N-acetylenolpyruvoylglucosamine reductase from Streptococcus pneumoniae (strain JJA).